The chain runs to 338 residues: Acetoin:2,6-dichlorophenolindophenol oxidoreductase subunit beta (338 aa).

Tetramer of 2 alpha and 2 beta subunits.

It participates in ketone degradation; acetoin degradation. In terms of biological role, catalyzes the 2,6-dichlorophenolindophenol-dependent cleavage of acetoin into acetate and acetaldehyde, in vitro. The beta subunit is probably not the catalytic subunit of the enzyme. This chain is Acetoin:2,6-dichlorophenolindophenol oxidoreductase subunit beta (acoB), found in Cupriavidus necator (strain ATCC 17699 / DSM 428 / KCTC 22496 / NCIMB 10442 / H16 / Stanier 337) (Ralstonia eutropha).